We begin with the raw amino-acid sequence, 523 residues long: Vanin-like protein 3 (523 aa).

The first 19 residues, 1–19 (MAVFLRRFLWLISFTLVLT), serve as a signal peptide directing secretion. In terms of domain architecture, CN hydrolase spans 29–298 (YIAGVVEYRP…RKLLLAKVPL (270 aa)). N64 is a glycosylation site (N-linked (GlcNAc...) asparagine). Catalysis depends on E74, which acts as the Proton acceptor. Catalysis depends on K167, which acts as the Proton donor. Residues N177 and N192 are each glycosylated (N-linked (GlcNAc...) asparagine). The Nucleophile role is filled by C200. N-linked (GlcNAc...) asparagine glycosylation is found at N330 and N468. N498 is lipidated: GPI-anchor amidated asparagine. A propeptide spans 499–523 (GGAGRLGTLLFLLITPLIMMHLFRE) (removed in mature form).

It belongs to the carbon-nitrogen hydrolase superfamily. BTD/VNN family. Expressed in third instar larvae.

The protein resides in the cell membrane. The chain is Vanin-like protein 3 from Drosophila melanogaster (Fruit fly).